The chain runs to 953 residues: ALS2 C-terminal-like protein (953 aa).

MORN repeat units lie at residues 358–380 (YEGE…DGRN), 381–403 (HVGD…QASE), 409–431 (YKCH…TSEV), 432–454 (YKGY…PQAP), 459–481 (YTGH…DRGE), 483–505 (YIGM…AGVC), 506–528 (YQGT…DDSL), and 529–552 (YEGT…NGFT). Residues 796 to 942 (LFPDARLLEF…IQKEDMRLHR (147 aa)) form the VPS9 domain.

Homodimer. Forms a heteromeric complex with ALS2. Interacts with ALS2 and RAB5A.

It is found in the cytoplasm. Acts as a guanine nucleotide exchange factor (GEF) for Rab5 GTPase. Regulates the ALS2-mediated endosome dynamics. This chain is ALS2 C-terminal-like protein (ALS2CL), found in Bos taurus (Bovine).